A 308-amino-acid polypeptide reads, in one-letter code: HTH-type transcriptional activator AllS (308 aa).

In terms of domain architecture, HTH lysR-type spans 2–59 (FDPETLRTFIAVAETGSFSKAAERLCKTTATISYRIKLLEENTGVALFFRTTRSVTLT). Positions 19-38 (FSKAAERLCKTTATISYRIK) form a DNA-binding region, H-T-H motif.

The protein belongs to the LysR transcriptional regulatory family.

Positive regulator essential for the expression of AllD operon. Binds to the AllD promoter. The sequence is that of HTH-type transcriptional activator AllS (allS) from Escherichia coli O157:H7.